An 808-amino-acid polypeptide reads, in one-letter code: MKLSLDWMNDFTPLKEVGLDAILKKIAISVCEIDDATEFRPELDFVKIVRIESLEKHPSADKLQIVQVFDGSSKSQIVTGATNVKIGDLVPLAIPGAKLGDKEILESELRGVKSSGMLCSEKELFLSEEGNGVWILNGLDQAEVGKTIRSFLYYDDIIFEVDNKSITHRPDLWSHFGFARELASQLRLPIVFNPFESLWNFDLSVKLPKVLENQNAHSYYASSISGVSVFPSKRKFQSRLQKCGVRVINNVVDVSNYVMLEMGQPTHFFDKKFLENQGEISLEVSFAKKGESFALLDETSPALEEEVLLIRNQGKPVAIAGVMGGKESAVQNTTTEIVMESAVFMRERIRKSIRSTGIRSDSSVRYEKGLEATTTLPVIRRALNLLKENGCSELKASEPVGFLHIPHKEVRIHTDIHFINAKLGVTLSQGDITDILERLHFIVSWKGEHLEVLVPKFRHNYDVTIPEDLVEEIGRTKGYDTIQVSPLLAEVKTPIRNLNRELERKCKTFFAIALKYHEVFNYSFQSYKENEFSGDPKLSVKIKNEMPEEQSVLRNSLLPSLLKNTRTNQDRFSEIKIFEFGRVYFNLPEPENEKKIFAFAVSLDKKSSEPDLKLLEEDFLKIKKEVESFLESIQIYEYTWKIQQETIFHPGANLCLVARSGKDGLETIVGNLGYVHPAILDSFELKKRVIYGSFEFERIVELWNQNRKVSRFVTPSQFPEAEIDLSILVGEKENTNVFTDLVKLERIPELKEGWVYSQFMGGNVPEGKKSVSYRFRLVNYERTFTQERIKEISDQLVILAGKNGFVLR.

The tRNA-binding domain occupies 40–149; it reads RPELDFVKIV…DQAEVGKTIR (110 aa). In terms of domain architecture, B5 spans 407 to 484; that stretch reads HKEVRIHTDI…RTKGYDTIQV (78 aa). Positions 462, 468, 471, and 472 each coordinate Mg(2+). Residues 716–808 enclose the FDX-ACB domain; it reads SQFPEAEIDL…LAGKNGFVLR (93 aa).

It belongs to the phenylalanyl-tRNA synthetase beta subunit family. Type 1 subfamily. As to quaternary structure, tetramer of two alpha and two beta subunits. It depends on Mg(2+) as a cofactor.

The protein localises to the cytoplasm. The enzyme catalyses tRNA(Phe) + L-phenylalanine + ATP = L-phenylalanyl-tRNA(Phe) + AMP + diphosphate + H(+). The chain is Phenylalanine--tRNA ligase beta subunit from Leptospira interrogans serogroup Icterohaemorrhagiae serovar Lai (strain 56601).